The following is a 214-amino-acid chain: Dual specificity phosphatase 29 (214 aa).

Residues 46–194 (HVNEVWPNLY…LRELDIELAL (149 aa)) enclose the Tyrosine-protein phosphatase domain. 138-145 (HCAMGRSR) contributes to the substrate binding site. C139 functions as the Phosphocysteine intermediate in the catalytic mechanism.

Belongs to the protein-tyrosine phosphatase family. Non-receptor class dual specificity subfamily.

It is found in the cytoplasm. It localises to the nucleus. The enzyme catalyses O-phospho-L-tyrosyl-[protein] + H2O = L-tyrosyl-[protein] + phosphate. It catalyses the reaction O-phospho-L-seryl-[protein] + H2O = L-seryl-[protein] + phosphate. The catalysed reaction is O-phospho-L-threonyl-[protein] + H2O = L-threonyl-[protein] + phosphate. Its function is as follows. Dual specificity phosphatase able to dephosphorylate phosphotyrosine, phosphoserine and phosphothreonine residues within the same substrate, with a preference for phosphotyrosine as a substrate. Involved in the modulation of AMPK and MAPK1/2 signaling pathways. This Gallus gallus (Chicken) protein is Dual specificity phosphatase 29 (DUSP29).